Consider the following 186-residue polypeptide: UPF0200 protein PF1294 (186 aa).

7–14 (GMPGSGKG) lines the ATP pocket.

Belongs to the UPF0200 family.

In Pyrococcus furiosus (strain ATCC 43587 / DSM 3638 / JCM 8422 / Vc1), this protein is UPF0200 protein PF1294.